Consider the following 197-residue polypeptide: Small ribosomal subunit protein uS4c (197 aa).

One can recognise an S4 RNA-binding domain in the interval 92-153 (MRLDAVVYRL…APIVEHAKTF (62 aa)).

Belongs to the universal ribosomal protein uS4 family. In terms of assembly, part of the 30S ribosomal subunit. Contacts protein S5. The interaction surface between S4 and S5 is involved in control of translational fidelity.

The protein resides in the plastid. Its subcellular location is the chloroplast. In terms of biological role, one of the primary rRNA binding proteins, it binds directly to 16S rRNA where it nucleates assembly of the body of the 30S subunit. With S5 and S12 plays an important role in translational accuracy. This chain is Small ribosomal subunit protein uS4c (rps4), found in Ostreococcus tauri.